A 228-amino-acid chain; its full sequence is MADS-box transcription factor 22 (228 aa).

Positions 1 to 61 (MARERREIKR…GKLSHFASSS (61 aa)) constitute an MADS-box domain. The region spanning 86–176 (LNLEHSKYAH…RNQVSQISPA (91 aa)) is the K-box domain. A disordered region spans residues 189 to 217 (EGQSSESVMTALHSGSSQSQDNDDGSDVS).

Expressed in palea and stamen primordia. Expressed in shoots and coleoptiles.

It is found in the nucleus. Its function is as follows. Probable transcription factor. May be required for spikelet (rice flower) development. Transcription factor that functions to support the MADS55 in its function as negative regulator of brassinosteroid signaling. This is MADS-box transcription factor 22 (MADS22) from Oryza sativa subsp. japonica (Rice).